Consider the following 293-residue polypeptide: uncharacterized protein (293 aa).

Residues Thr43 and Tyr105 each act as charge relay system in the active site. Tyr131 acts as the Proton donor in catalysis. Residue Lys159 is the Schiff-base intermediate with substrate of the active site.

Belongs to the DapA family. Homotetramer.

Its subcellular location is the cytoplasm. This is an uncharacterized protein from Thermococcus onnurineus (strain NA1).